Here is a 291-residue protein sequence, read N- to C-terminus: Proteasomal ubiquitin receptor ADRM1 homolog rpn1301 (291 aa).

Positions 1–114 (MSLITFKAGK…ERINSYIKDQ (114 aa)) constitute a Pru domain. The interval 135–162 (TVEQSEPIAQPTESSKESSEIGAPNSDE) is disordered. Residues 178-290 (AQAGFGGSTV…ARFVSRNNGS (113 aa)) enclose the DEUBAD domain.

This sequence belongs to the ADRM1 family. In terms of assembly, component of the 19S proteasome regulatory particle complex. The 2 S.pombe rpn13 homologs, rpn1301 and rpn1302 are present at a 0.2-1 ratio.

It is found in the cytoplasm. The protein resides in the nucleus. Its function is as follows. Component of the 26S proteasome, a multiprotein complex involved in the ATP-dependent degradation of ubiquitinated proteins. This complex plays a key role in the maintenance of protein homeostasis by removing misfolded or damaged proteins, which could impair cellular functions, and by removing proteins whose functions are no longer required. Therefore, the proteasome participates in numerous cellular processes, including cell cycle progression, apoptosis, or DNA damage repair. Within the complex, functions as a proteasomal ubiquitin receptor. The sequence is that of Proteasomal ubiquitin receptor ADRM1 homolog rpn1301 (rpn1301) from Schizosaccharomyces pombe (strain 972 / ATCC 24843) (Fission yeast).